The chain runs to 235 residues: Small ribosomal subunit protein uS3 (235 aa).

The region spanning 39–107 (VRLFLRKELF…PTQINIAEIR (69 aa)) is the KH type-2 domain.

It belongs to the universal ribosomal protein uS3 family. In terms of assembly, part of the 30S ribosomal subunit. Forms a tight complex with proteins S10 and S14.

Its function is as follows. Binds the lower part of the 30S subunit head. Binds mRNA in the 70S ribosome, positioning it for translation. The chain is Small ribosomal subunit protein uS3 from Buchnera aphidicola subsp. Baizongia pistaciae (strain Bp).